Here is a 133-residue protein sequence, read N- to C-terminus: Small ribosomal subunit protein uS8 (133 aa).

It belongs to the universal ribosomal protein uS8 family. Part of the 30S ribosomal subunit. Contacts proteins S5 and S12.

Functionally, one of the primary rRNA binding proteins, it binds directly to 16S rRNA central domain where it helps coordinate assembly of the platform of the 30S subunit. The chain is Small ribosomal subunit protein uS8 from Orientia tsutsugamushi (strain Ikeda) (Rickettsia tsutsugamushi).